The chain runs to 152 residues: Large ribosomal subunit protein bL9 (152 aa).

The protein belongs to the bacterial ribosomal protein bL9 family.

Functionally, binds to the 23S rRNA. This Nostoc punctiforme (strain ATCC 29133 / PCC 73102) protein is Large ribosomal subunit protein bL9.